The chain runs to 419 residues: Creatine kinase S-type, mitochondrial (419 aa).

Residues 1-39 (MASTFSKLLTGRNASLLFATLGTGALTTGYLLNKQNVCA) constitute a mitochondrion transit peptide. The interval 40-64 (AAREQHKLFPPSADYPDLRKHNNCM) is cardiolipin-binding. In terms of domain architecture, Phosphagen kinase N-terminal spans 46-132 (KLFPPSADYP…FDPVIKLRHN (87 aa)). The 243-residue stretch at 159–401 (YVLSSRVRTG…NYLVDCEKKL (243 aa)) folds into the Phosphagen kinase C-terminal domain. ATP contacts are provided by residues 162-166 (SSRVR) and H225. Y255 is modified (phosphotyrosine). ATP-binding positions include R270, R326, 354 to 359 (RGTGGV), and D369. T356 is subject to Phosphothreonine.

Belongs to the ATP:guanido phosphotransferase family. In terms of assembly, exists as an octamer composed of four CKMT2 homodimers.

Its subcellular location is the mitochondrion inner membrane. It catalyses the reaction creatine + ATP = N-phosphocreatine + ADP + H(+). In terms of biological role, reversibly catalyzes the transfer of phosphate between ATP and various phosphogens (e.g. creatine phosphate). Creatine kinase isoenzymes play a central role in energy transduction in tissues with large, fluctuating energy demands, such as skeletal muscle, heart, brain and spermatozoa. This chain is Creatine kinase S-type, mitochondrial (CKMT2), found in Bos taurus (Bovine).